The sequence spans 369 residues: Proton-coupled zinc antiporter SLC30A8 (369 aa).

The Cytoplasmic portion of the chain corresponds to methionine 1–alanine 79. The disordered stretch occupies residues proline 31–histidine 52. Over residues valine 32–glutamate 44 the composition is skewed to basic and acidic residues. Zn(2+) contacts are provided by histidine 52, cysteine 53, and histidine 54. Residues histidine 52–histidine 54 carry the HCH Motif; seals regulatory zinc-binding pocket motif. A helical membrane pass occupies residues isoleucine 80–valine 100. Topologically, residues valine 101–aspartate 103 are lumenal, vesicle. Residues alanine 104–serine 124 form a helical membrane-spanning segment. Histidine 106, aspartate 110, and histidine 137 together coordinate Zn(2+). The Cytoplasmic segment spans residues serine 125–glutamate 140. The helical transmembrane segment at isoleucine 141 to leucine 161 threads the bilayer. Residues alanine 162–alanine 175 are Lumenal, vesicle-facing. The chain crosses the membrane as a helical span at residues threonine 176 to leucine 196. The Cytoplasmic segment spans residues histidine 197 to alanine 217. The helical transmembrane segment at phenylalanine 218 to isoleucine 238 threads the bilayer. Zn(2+) is bound by residues histidine 220 and aspartate 224. Over tyrosine 239–lysine 245 the chain is Lumenal, vesicle. The chain crosses the membrane as a helical span at residues isoleucine 246 to isoleucine 266. The Cytoplasmic segment spans residues leucine 267–aspartate 369. Zn(2+)-binding residues include histidine 301, histidine 318, histidine 345, glutamate 352, cysteine 361, and cysteine 364.

This sequence belongs to the cation diffusion facilitator (CDF) transporter (TC 2.A.4) family. SLC30A subfamily. In terms of assembly, homodimer. In the endocrine pancreas, expressed in insulin-producing beta cells. Expressed at relatively high levels in subcutaneous fat tissue from lean persons; much lower levels in visceral fat, whether from lean or obese individuals, and in subcutaneous fat tissue from obese individuals. Expressed in peripheral blood mononuclear cells, including T-cells and B-cells, with great variation among individuals ranging from negative to strongly positive.

It is found in the cytoplasmic vesicle. It localises to the secretory vesicle membrane. The protein localises to the cell membrane. The catalysed reaction is Zn(2+)(in) + 2 H(+)(out) = Zn(2+)(out) + 2 H(+)(in). Proton-coupled zinc ion antiporter mediating the entry of zinc into the lumen of pancreatic beta cell secretory granules, thereby regulating insulin secretion. This is Proton-coupled zinc antiporter SLC30A8 from Homo sapiens (Human).